A 530-amino-acid polypeptide reads, in one-letter code: 26S proteasome non-ATPase regulatory subunit 3 (530 aa).

Residues 1–16 (MKQEGSARRRGADKAK) show a composition bias toward basic and acidic residues. The interval 1–65 (MKQEGSARRR…TEHSQRELDT (65 aa)) is disordered. The span at 17-30 (PPPGGEQEPPPPAP) shows a compositional bias: pro residues. Lysine 36 is covalently cross-linked (Glycyl lysine isopeptide (Lys-Gly) (interchain with G-Cter in SUMO1); alternate). Lysine 36 participates in a covalent cross-link: Glycyl lysine isopeptide (Lys-Gly) (interchain with G-Cter in SUMO2); alternate. A PCI domain is found at 282–461 (ARYLYYTGRI…GYVQSKEMID (180 aa)). Phosphoserine occurs at positions 414 and 426. Positions 496–530 (SYNKDLESAEERREREQQDLEFAKEMAEDDDDSFP) are disordered. Residues 497 to 521 (YNKDLESAEERREREQQDLEFAKEM) show a composition bias toward basic and acidic residues.

The protein belongs to the proteasome subunit S3 family. Component of the 19S proteasome regulatory particle complex. The 26S proteasome consists of a 20S core particle (CP) and two 19S regulatory subunits (RP). The regulatory particle is made of a lid composed of 9 subunits including PSMD3, a base containing 6 ATPases and few additional components. Interacts with UBQLN1 (via ubiquitin-like domain). Interacts with ERCC6.

In terms of biological role, component of the 26S proteasome, a multiprotein complex involved in the ATP-dependent degradation of ubiquitinated proteins. This complex plays a key role in the maintenance of protein homeostasis by removing misfolded or damaged proteins, which could impair cellular functions, and by removing proteins whose functions are no longer required. Therefore, the proteasome participates in numerous cellular processes, including cell cycle progression, apoptosis, or DNA damage repair. In Mus musculus (Mouse), this protein is 26S proteasome non-ATPase regulatory subunit 3 (Psmd3).